Consider the following 258-residue polypeptide: MAAPRAVLHLGAREWNGRARRIHGMSELVTPDSSREKKRTLLQFLSDHFQDIQTLREYLLQKQISKVNRENRSFTNIQEKYGPYVAGAVFILKQGGAVKFQDKEEWIRPNNRSHFLAEIQKFQNVPVEAVDASGCAINYQGLSNLLPLKELRSLSLQRCPNLDDWCLSRLYLLAGSLQELSLAGCPRISERGLACLHHLQNLRRLDISDLPAVSHPGLTQILVEEMLPHCEVLGADWAQNLKLEPDKQPPDTSTPLSS.

The protein belongs to the ATP synthase subunit s family. In terms of assembly, interacts with incompletely assembled mitochondrial NADH:ubiquinone oxidoreductase complex (complex I).

It localises to the mitochondrion. Its function is as follows. Required for the assembly of the mitochondrial NADH:ubiquinone oxidoreductase complex (complex I). Involved in the assembly of the distal region of complex I. This is Distal membrane-arm assembly complex protein 2 (Dmac2) from Mus musculus (Mouse).